The sequence spans 332 residues: Receptor polysaccharide phosphotransferase WefC (332 aa).

The protein belongs to the stealth family.

The chain is Receptor polysaccharide phosphotransferase WefC (wefC) from Streptococcus oralis.